Consider the following 887-residue polypeptide: Amyloid-beta-like protein (887 aa).

Positions Met-1–Ala-27 are cleaved as a signal peptide. Residues Ala-28–Tyr-813 lie on the Extracellular side of the membrane. The segment at Pro-30–Gln-133 is GFLD subdomain. One can recognise an E1 domain in the interval Pro-30 to Lys-199. Disulfide bonds link Cys-40–Cys-70, Cys-81–Cys-128, Cys-106–Cys-116, Cys-143–Cys-197, Cys-154–Cys-184, and Cys-168–Cys-196. The tract at residues Glu-141–Lys-199 is cuBD subdomain. Residues Asn-150 and Asn-161 are each glycosylated (N-linked (GlcNAc...) asparagine). 2 disordered regions span residues Asn-225–Gln-365 and Asn-377–Ser-396. Residues Asn-237 and Asn-240 are each glycosylated (N-linked (GlcNAc...) asparagine). Residues Asn-246 to Ala-267 are compositionally biased toward acidic residues. Over residues Asp-268 to Asp-292 the composition is skewed to low complexity. The span at Ile-293–Ala-321 shows a compositional bias: acidic residues. Positions Ala-329–Lys-352 are enriched in low complexity. An E2 domain is found at Thr-395–Tyr-597. The N-linked (GlcNAc...) asparagine glycan is linked to Asn-574. The disordered stretch occupies residues Lys-675–Ser-743. Over residues Gln-681–Gln-699 the composition is skewed to low complexity. The chain crosses the membrane as a helical span at residues Phe-814–Ala-834. Topologically, residues Lys-835–Glu-887 are cytoplasmic. Residues Tyr-875 to Tyr-880 carry the YENPXY motif motif.

This sequence belongs to the APP family. Interacts (via the intracellular domain, ICD) with APP-BP1. Expressed in postmitotic neurons in the central and peripheral nervous systems. Within the nervous system, transcripts are not observed in neuroblasts, newly generated neurons and at least one class of presumed glial cells.

The protein resides in the membrane. During development, plays a role in the regulation of the neddylation pathway. Appl and APP-BP1 interact antagonistically during development. The polypeptide is Amyloid-beta-like protein (Appl) (Drosophila melanogaster (Fruit fly)).